We begin with the raw amino-acid sequence, 338 residues long: Phenylalanine--tRNA ligase alpha subunit (338 aa).

Glu252 contacts Mg(2+).

The protein belongs to the class-II aminoacyl-tRNA synthetase family. Phe-tRNA synthetase alpha subunit type 1 subfamily. As to quaternary structure, tetramer of two alpha and two beta subunits. Mg(2+) serves as cofactor.

Its subcellular location is the cytoplasm. The catalysed reaction is tRNA(Phe) + L-phenylalanine + ATP = L-phenylalanyl-tRNA(Phe) + AMP + diphosphate + H(+). The polypeptide is Phenylalanine--tRNA ligase alpha subunit (Pseudomonas fluorescens (strain ATCC BAA-477 / NRRL B-23932 / Pf-5)).